We begin with the raw amino-acid sequence, 119 residues long: Large ribosomal subunit protein bL20 (119 aa).

It belongs to the bacterial ribosomal protein bL20 family.

In terms of biological role, binds directly to 23S ribosomal RNA and is necessary for the in vitro assembly process of the 50S ribosomal subunit. It is not involved in the protein synthesizing functions of that subunit. This Latilactobacillus sakei subsp. sakei (strain 23K) (Lactobacillus sakei subsp. sakei) protein is Large ribosomal subunit protein bL20.